The chain runs to 380 residues: Kappa-type opioid receptor (380 aa).

At 1-57 (MDSPIQIFRGEPGPTCAPSACLPPNSSAWFPGWAEPDSNGSAGSEDAQLEPAHISPA) the chain is on the extracellular side. N-linked (GlcNAc...) asparagine glycosylation is found at Asn25 and Asn39. Residues 58–85 (IPVIITAVYSVVFVVGLVGNSLVMFVII) form a helical membrane-spanning segment. Residues 86–95 (RYTKMKTATN) are Cytoplasmic-facing. Residues 96–119 (IYIFNLALADALVTTTMPFQSTVY) form a helical membrane-spanning segment. The Extracellular segment spans residues 120–132 (LMNSWPFGDVLCK). Cys131 and Cys210 are joined by a disulfide. A helical membrane pass occupies residues 133-154 (IVISIDYYNMFTSIFTLTMMSV). Residues 155–173 (DRYIAVCHPVKALDFRTPL) lie on the Cytoplasmic side of the membrane. The helical transmembrane segment at 174–196 (KAKIINICIWLLSSSVGISAIVL) threads the bilayer. Topologically, residues 197 to 222 (GGTKVREDVDVIECSLQFPDDDYSWW) are extracellular. The chain crosses the membrane as a helical span at residues 223–247 (DLFMKICVFIFAFVIPVLIIIVCYT). The Cytoplasmic segment spans residues 248–274 (LMILRLKSVRLLSGSREKDRNLRRITR). A helical transmembrane segment spans residues 275 to 296 (LVLVVVAVFVVCWTPIHIFILV). Residues 297–311 (EALGSTSHSTAALSS) lie on the Extracellular side of the membrane. A helical transmembrane segment spans residues 312–333 (YYFCIALGYTNSSLNPILYAFL). At 334-380 (DENFKRCFRDFCFPLKMRMERQSTSRVRNTVQDPAYLRDIDGMNKPV) the chain is on the cytoplasmic side. A lipid anchor (S-palmitoyl cysteine) is attached at Cys345.

This sequence belongs to the G-protein coupled receptor 1 family. As to quaternary structure, interacts with NHERF1. Interacts with GABARAPL1. As to expression, detected in brain and placenta.

Its subcellular location is the cell membrane. G-protein coupled opioid receptor that functions as a receptor for endogenous alpha-neoendorphins and dynorphins, but has low affinity for beta-endorphins. Also functions as a receptor for various synthetic opioids and for the psychoactive diterpene salvinorin A. Ligand binding causes a conformation change that triggers signaling via guanine nucleotide-binding proteins (G proteins) and modulates the activity of down-stream effectors, such as adenylate cyclase. Signaling leads to the inhibition of adenylate cyclase activity. Inhibits neurotransmitter release by reducing calcium ion currents and increasing potassium ion conductance. Plays a role in the perception of pain. Plays a role in mediating reduced physical activity upon treatment with synthetic opioids. Plays a role in the regulation of salivation in response to synthetic opioids. May play a role in arousal and regulation of autonomic and neuroendocrine functions. The protein is Kappa-type opioid receptor (OPRK1) of Homo sapiens (Human).